Reading from the N-terminus, the 75-residue chain is Small ribosomal subunit protein bS18 (75 aa).

The protein belongs to the bacterial ribosomal protein bS18 family. As to quaternary structure, part of the 30S ribosomal subunit. Forms a tight heterodimer with protein bS6.

Functionally, binds as a heterodimer with protein bS6 to the central domain of the 16S rRNA, where it helps stabilize the platform of the 30S subunit. The chain is Small ribosomal subunit protein bS18 from Hydrogenovibrio crunogenus (strain DSM 25203 / XCL-2) (Thiomicrospira crunogena).